The chain runs to 217 residues: Deoxyribose-phosphate aldolase (217 aa).

Asp95 serves as the catalytic Proton donor/acceptor. Lys156 acts as the Schiff-base intermediate with acetaldehyde in catalysis. The active-site Proton donor/acceptor is Lys184.

This sequence belongs to the DeoC/FbaB aldolase family. DeoC type 1 subfamily.

The protein localises to the cytoplasm. The catalysed reaction is 2-deoxy-D-ribose 5-phosphate = D-glyceraldehyde 3-phosphate + acetaldehyde. It participates in carbohydrate degradation; 2-deoxy-D-ribose 1-phosphate degradation; D-glyceraldehyde 3-phosphate and acetaldehyde from 2-deoxy-alpha-D-ribose 1-phosphate: step 2/2. Catalyzes a reversible aldol reaction between acetaldehyde and D-glyceraldehyde 3-phosphate to generate 2-deoxy-D-ribose 5-phosphate. This Thermosynechococcus vestitus (strain NIES-2133 / IAM M-273 / BP-1) protein is Deoxyribose-phosphate aldolase.